Consider the following 617-residue polypeptide: Leucine aminopeptidase 2 (617 aa).

Residues 139 to 141 (QCQ) and 271 to 276 (PYGGME) each bind a peptide. Residue His-300 participates in Zn(2+) binding. Glu-301 acts as the Proton acceptor in catalysis. Residues His-304 and Glu-323 each contribute to the Zn(2+) site. The active-site Proton donor is Tyr-388.

This sequence belongs to the peptidase M1 family. It depends on Zn(2+) as a cofactor.

Its subcellular location is the cytoplasm. It localises to the nucleus. The enzyme catalyses an epoxide + H2O = an ethanediol. In terms of biological role, aminopeptidase that preferentially cleaves di- and tripeptides. Also has low epoxide hydrolase activity (in vitro). Can hydrolyze the epoxide leukotriene LTA(4) but it forms preferentially 5,6-dihydroxy-7,9,11,14-eicosatetraenoic acid rather than the cytokine leukotriene B(4) as the product compared to the homologous mammalian enzyme (in vitro). The polypeptide is Leucine aminopeptidase 2 (Aspergillus terreus (strain NIH 2624 / FGSC A1156)).